Consider the following 1906-residue polypeptide: Alpha-2-macroglobulin homolog (1906 aa).

The signal sequence occupies residues 1 to 21 (MIIRVCIRCFIVLTLVLGIGG). Cys-22 carries N-palmitoyl cysteine lipidation. The S-diacylglycerol cysteine moiety is linked to residue Cys-22.

This sequence belongs to the protease inhibitor I39 (alpha-2-macroglobulin) family. Bacterial alpha-2-macroglobulin subfamily.

It is found in the cell membrane. This is Alpha-2-macroglobulin homolog from Nostoc sp. (strain PCC 7120 / SAG 25.82 / UTEX 2576).